The sequence spans 110 residues: MSLSEARFHDLVDATQQALEDLFDESGMDLDMENSAGVLTVKFEGGAQLIFSRQEPLRQLWLADRSGGFHFDYDEESKKWVCEKSEELLGEMLERIVWERAGEKLDFDEI.

Belongs to the frataxin family.

In terms of biological role, involved in iron-sulfur (Fe-S) cluster assembly. May act as a regulator of Fe-S biogenesis. This chain is Iron-sulfur cluster assembly protein CyaY, found in Pseudomonas putida (strain GB-1).